A 221-amino-acid polypeptide reads, in one-letter code: Putative 5'(3')-deoxyribonucleotidase R824 (221 aa).

Positions 16 and 18 each coordinate Mg(2+). D18 functions as the Nucleophile in the catalytic mechanism. Phosphate contacts are provided by D18, S103, and K138. Position 149 (D149) interacts with Mg(2+).

It belongs to the 5'(3')-deoxyribonucleotidase family. It depends on Mg(2+) as a cofactor.

Functionally, dephosphorylates the 5' and 2'(3')-phosphates of deoxyribonucleotides. This chain is Putative 5'(3')-deoxyribonucleotidase R824, found in Acanthamoeba polyphaga mimivirus (APMV).